The following is a 334-amino-acid chain: GTP 3',8-cyclase (334 aa).

The Radical SAM core domain maps to 11–236 (GFNRKIDYLR…ESTESSMGPA (226 aa)). Arg-20 provides a ligand contact to GTP. Cys-27 and Cys-31 together coordinate [4Fe-4S] cluster. S-adenosyl-L-methionine is bound at residue Tyr-33. Cys-34 is a binding site for [4Fe-4S] cluster. GTP is bound at residue Arg-69. Residue Gly-73 participates in S-adenosyl-L-methionine binding. Thr-100 contributes to the GTP binding site. Ser-124 is a binding site for S-adenosyl-L-methionine. Lys-161 serves as a coordination point for GTP. Met-195 lines the S-adenosyl-L-methionine pocket. [4Fe-4S] cluster-binding residues include Cys-260 and Cys-263. 265–267 (RVR) lines the GTP pocket. Cys-277 serves as a coordination point for [4Fe-4S] cluster.

It belongs to the radical SAM superfamily. MoaA family. Monomer and homodimer. The cofactor is [4Fe-4S] cluster.

It carries out the reaction GTP + AH2 + S-adenosyl-L-methionine = (8S)-3',8-cyclo-7,8-dihydroguanosine 5'-triphosphate + 5'-deoxyadenosine + L-methionine + A + H(+). The protein operates within cofactor biosynthesis; molybdopterin biosynthesis. Functionally, catalyzes the cyclization of GTP to (8S)-3',8-cyclo-7,8-dihydroguanosine 5'-triphosphate. The sequence is that of GTP 3',8-cyclase from Pseudomonas putida (strain ATCC 700007 / DSM 6899 / JCM 31910 / BCRC 17059 / LMG 24140 / F1).